The sequence spans 315 residues: Ribosomal RNA small subunit methyltransferase H (315 aa).

S-adenosyl-L-methionine-binding positions include 35 to 37, D55, F79, D101, and Q108; that span reads GGH.

It belongs to the methyltransferase superfamily. RsmH family.

The protein resides in the cytoplasm. It carries out the reaction cytidine(1402) in 16S rRNA + S-adenosyl-L-methionine = N(4)-methylcytidine(1402) in 16S rRNA + S-adenosyl-L-homocysteine + H(+). Its function is as follows. Specifically methylates the N4 position of cytidine in position 1402 (C1402) of 16S rRNA. The sequence is that of Ribosomal RNA small subunit methyltransferase H from Sodalis glossinidius (strain morsitans).